A 327-amino-acid polypeptide reads, in one-letter code: GTPase Obg (327 aa).

The Obg domain occupies 3–160 (NKFTDFIKIY…FIFVLELKIL (158 aa)). The OBG-type G domain occupies 161-327 (ADVGLIGLPN…LIYYICNILS (167 aa)). GTP-binding positions include 167–174 (GLPNSGKS), 192–196 (FTTLN), 214–217 (DIPG), 281–284 (SKSD), and 308–310 (SSF). Mg(2+) contacts are provided by serine 174 and threonine 194.

This sequence belongs to the TRAFAC class OBG-HflX-like GTPase superfamily. OBG GTPase family. As to quaternary structure, monomer. Mg(2+) is required as a cofactor.

It is found in the cytoplasm. Its function is as follows. An essential GTPase which binds GTP, GDP and possibly (p)ppGpp with moderate affinity, with high nucleotide exchange rates and a fairly low GTP hydrolysis rate. Plays a role in control of the cell cycle, stress response, ribosome biogenesis and in those bacteria that undergo differentiation, in morphogenesis control. In Karelsulcia muelleri (strain GWSS) (Sulcia muelleri), this protein is GTPase Obg.